Consider the following 338-residue polypeptide: 1-aminocyclopropane-1-carboxylate deaminase (338 aa).

An N6-(pyridoxal phosphate)lysine modification is found at K51. Catalysis depends on S78, which acts as the Nucleophile.

The protein belongs to the ACC deaminase/D-cysteine desulfhydrase family. In terms of assembly, homotrimer. It depends on pyridoxal 5'-phosphate as a cofactor.

The enzyme catalyses 1-aminocyclopropane-1-carboxylate + H2O = 2-oxobutanoate + NH4(+). Catalyzes a cyclopropane ring-opening reaction, the irreversible conversion of 1-aminocyclopropane-1-carboxylate (ACC) to ammonia and alpha-ketobutyrate. Allows growth on ACC as a nitrogen source. In Pseudomonas sp. (strain ACP), this protein is 1-aminocyclopropane-1-carboxylate deaminase.